The sequence spans 452 residues: Digeranylgeranylglycerophospholipid reductase (452 aa).

FAD-binding positions include 15-16 (FA), 35-36 (DS), and 45-50 (KPCGDA). A 2,3-bis-O-phytanyl-sn-glycerol 1-phospholipid is bound at residue H55. FAD contacts are provided by A122 and D288. H297 lines the a 2,3-bis-O-phytanyl-sn-glycerol 1-phospholipid pocket. 300-301 (GK) contributes to the FAD binding site. C310 and C335 are oxidised to a cystine. Y340 provides a ligand contact to a 2,3-bis-O-phytanyl-sn-glycerol 1-phospholipid.

It belongs to the geranylgeranyl reductase family. In terms of assembly, monomer. Requires FAD as cofactor.

The catalysed reaction is a 2,3-bis-O-phytanyl-sn-glycerol 1-phospholipid + 8 A = a 2,3-bis-O-(geranylgeranyl)-sn-glycerol 1-phospholipid + 8 AH2. The enzyme catalyses 2,3-bis-O-(phytanyl)-sn-glycerol 1-phosphate + 8 A = 2,3-bis-O-(geranylgeranyl)-sn-glycerol 1-phosphate + 8 AH2. It catalyses the reaction sn-3-O-phytanylglycerol 1-phosphate + 4 A = sn-3-O-(geranylgeranyl)glycerol 1-phosphate + 4 AH2. It carries out the reaction phytyl diphosphate + 3 A = (2E,6E,10E)-geranylgeranyl diphosphate + 3 AH2. The protein operates within membrane lipid metabolism; glycerophospholipid metabolism. In terms of biological role, is involved in the reduction of 2,3-digeranylgeranylglycerophospholipids (unsaturated archaeols) into 2,3-diphytanylglycerophospholipids (saturated archaeols) in the biosynthesis of archaeal membrane lipids. Catalyzes the formation of archaetidic acid (2,3-di-O-phytanyl-sn-glyceryl phosphate) from 2,3-di-O-geranylgeranylglyceryl phosphate (DGGGP) via the hydrogenation of each double bond of the isoprenoid chains. Is not active with NADPH or NADH as an electron donor; the physiological reducing agent is unknown. Is also active on the more upstream precursors of membrane lipid biosynthesis, catalyzing the complete reduction of 3-O-geranylgeranylglyceryl phosphate (GGGP) to 3-O-phytanylglyceryl phosphate, and the partial reduction of geranylgeranyl diphosphate (GGPP) to phytyl diphosphate, thus reducing three of four GGPP double bonds and preserving the allylic double bond (at position 2). This reaction product is a reactive prenyl donor, which can be used as a substrate by archaeal prenyltransferases such as GGGP synthases. This Sulfolobus acidocaldarius (strain ATCC 33909 / DSM 639 / JCM 8929 / NBRC 15157 / NCIMB 11770) protein is Digeranylgeranylglycerophospholipid reductase.